The primary structure comprises 838 residues: Glycogen phosphorylase, brain form (838 aa).

An N-acetylalanine modification is found at Ala-2. Ser-15 carries the post-translational modification Phosphoserine. 3 residues coordinate AMP: Asp-43, Tyr-197, and Arg-310. A Phosphotyrosine modification is found at Tyr-197. Tyr-473 carries the phosphotyrosine modification. Phosphoserine is present on Ser-524. Lys-569 is a pyridoxal 5'-phosphate binding site. The pyridoxal 5'-phosphate stretch occupies residues 677–678; it reads TG. An N6-(pyridoxal phosphate)lysine modification is found at Lys-681.

This sequence belongs to the glycogen phosphorylase family. Homodimer. Dimers associate into a tetramer to form the enzymatically active phosphorylase A. The cofactor is pyridoxal 5'-phosphate. Phosphorylation of Ser-15 converts phosphorylase B (unphosphorylated) to phosphorylase A.

It carries out the reaction [(1-&gt;4)-alpha-D-glucosyl](n) + phosphate = [(1-&gt;4)-alpha-D-glucosyl](n-1) + alpha-D-glucose 1-phosphate. Activity of phosphorylase is controlled both by allosteric means (through the non-covalent binding of metabolites) and by covalent modification. Thus AMP allosterically activates, whereas ATP, ADP, and glucose-6-phosphate allosterically inhibit, phosphorylase B. Its function is as follows. Glycogen phosphorylase that regulates glycogen mobilization. Phosphorylase is an important allosteric enzyme in carbohydrate metabolism. Enzymes from different sources differ in their regulatory mechanisms and in their natural substrates. However, all known phosphorylases share catalytic and structural properties. The protein is Glycogen phosphorylase, brain form (Pygb) of Rattus norvegicus (Rat).